A 101-amino-acid chain; its full sequence is NADH-quinone oxidoreductase subunit K (101 aa).

3 helical membrane-spanning segments follow: residues 2–22 (ISLN…LVGV), 29–49 (IMLF…LVAI), and 63–83 (MFII…LILW).

It belongs to the complex I subunit 4L family. As to quaternary structure, NDH-1 is composed of 14 different subunits. Subunits NuoA, H, J, K, L, M, N constitute the membrane sector of the complex.

The protein localises to the cell inner membrane. It catalyses the reaction a quinone + NADH + 5 H(+)(in) = a quinol + NAD(+) + 4 H(+)(out). Its function is as follows. NDH-1 shuttles electrons from NADH, via FMN and iron-sulfur (Fe-S) centers, to quinones in the respiratory chain. The immediate electron acceptor for the enzyme in this species is believed to be ubiquinone. Couples the redox reaction to proton translocation (for every two electrons transferred, four hydrogen ions are translocated across the cytoplasmic membrane), and thus conserves the redox energy in a proton gradient. This chain is NADH-quinone oxidoreductase subunit K, found in Campylobacter hominis (strain ATCC BAA-381 / DSM 21671 / CCUG 45161 / LMG 19568 / NCTC 13146 / CH001A).